The following is a 692-amino-acid chain: MAREFSLENTRNIGIMAHIDAGKTTATERILYYTGRIHKIGETHEGASQMDWMEQEQERGITITSAATTAQWKGHRVNIIDTPGHVDFTVEVERSLRVLDGAVAVLDAQSGVEPQTETVWRQATTYGVPRIVFVNKMDKIGADFLYSVGTIHDRLQANAHPIQLPIGAEDEFNGIIDLVEECAYMYGNDLGTDIQRVEIPEEHKELAEEYRGKLIEAVAELDEEMMMKYLEGEEITVEELKAGIRKATTSVEFFPVICGSAFKNKGVQILLDAVIDYLPSPLDVPAIKGTLPDTDEEVERKSSDEEPFAALAFKIMTDPYVGKLTFFRVYSGVLNSGSYVKNSTKGKRERVGRILQMHANSREEISTVYAGDIAAAVGLKDTTTGDTLCDEKSLVILESMEFPEPVISVAIEPKSKADQDKMGTALSKLSEEDPTFRAHTDQETGQTIIAGMGELHLDIIVDRMRREFKVEANVGAPQVAYRETFRAAAKVEGKFARQSGGRGQFGHVWIEFEPNEEGKGFEFENKIVGGVVPREYIPAVGAGLEDALKNGVLAGYPLVDIKAALVDGSYHDVDSSEMAFKIAASMALKAAVSKCSPVILEPMMKVEVVIPEEYMGDIMGDVTSRRGRVEGMEARGNAQVVRAMVPLSEMFGYATSLRSNTQGRGTFSMVFDHYEEVPKSVSEEIIKKNKGE.

The region spanning Glu8–Leu282 is the tr-type G domain. GTP contacts are provided by residues Ala17 to Thr24, Asp81 to His85, and Asn135 to Asp138.

This sequence belongs to the TRAFAC class translation factor GTPase superfamily. Classic translation factor GTPase family. EF-G/EF-2 subfamily.

It is found in the cytoplasm. In terms of biological role, catalyzes the GTP-dependent ribosomal translocation step during translation elongation. During this step, the ribosome changes from the pre-translocational (PRE) to the post-translocational (POST) state as the newly formed A-site-bound peptidyl-tRNA and P-site-bound deacylated tRNA move to the P and E sites, respectively. Catalyzes the coordinated movement of the two tRNA molecules, the mRNA and conformational changes in the ribosome. This chain is Elongation factor G, found in Bacillus cereus (strain ATCC 14579 / DSM 31 / CCUG 7414 / JCM 2152 / NBRC 15305 / NCIMB 9373 / NCTC 2599 / NRRL B-3711).